A 243-amino-acid polypeptide reads, in one-letter code: R-spondin-2 (243 aa).

A signal peptide spans 1 to 21; that stretch reads MQFQLFSFVLIILNCVDYSHC. 11 disulfide bridges follow: Cys40/Cys46, Cys43/Cys52, Cys55/Cys74, Cys78/Cys93, Cys96/Cys104, Cys101/Cys110, Cys113/Cys124, Cys128/Cys141, Cys145/Cys187, Cys156/Cys163, and Cys196/Cys203. An FU repeat occupies 90 to 134; that stretch reads MNRCSRCRIENCDSCFSRDFCIKCKSGFYSHKGQCFEECPEGFAP. In terms of domain architecture, TSP type-1 spans 144–204; it reads GCEVGPWSEW…RCKMAMRHCP (61 aa). Asn160 carries N-linked (GlcNAc...) asparagine glycosylation. The disordered stretch occupies residues 202-243; sequence HCPGGTRTTKKKDKKNKKKKKKLLERAQEQHSVVLATDRSSQ. Basic residues predominate over residues 209-224; the sequence is TTKKKDKKNKKKKKKL.

The protein belongs to the R-spondin family. Binds heparin.

Its subcellular location is the secreted. Activator of the canonical Wnt signaling pathway by acting as a ligand for lgr4-6 receptors. Upon binding to lgr4-6 (lgr4, lgr5 or lgr6), lgr4-6 associate with phosphorylated lrp6 and frizzled receptors that are activated by extracellular Wnt receptors, triggering the canonical Wnt signaling pathway to increase expression of target genes. Acts both in the canonical. Wnt/beta-catenin-dependent pathway and in non-canonical Wnt signaling pathway. Activates neural markers and promotes muscle formation. Overexpression blocks activin, nodal and BMP4 signaling, suggesting that it may negatively regulate the TGF-beta pathway. During embryonic development, plays a crucial role in limb specification, amplifying the Wnt signaling pathway independently of LGR4-6 receptors, possibly by acting as a direct antagonistic ligand to RNF43 and ZNRF3, hence governing the number of limbs an embryo should form. The protein is R-spondin-2 (rspo2) of Xenopus tropicalis (Western clawed frog).